A 337-amino-acid chain; its full sequence is Glyceraldehyde-3-phosphate dehydrogenase (337 aa).

NAD(+) is bound by residues 12–13 (RI), aspartate 34, and lysine 79. Residues 150-152 (SCT), threonine 181, 210-211 (TG), and arginine 233 contribute to the D-glyceraldehyde 3-phosphate site. Cysteine 151 acts as the Nucleophile in catalysis. Asparagine 315 is a binding site for NAD(+).

Belongs to the glyceraldehyde-3-phosphate dehydrogenase family. In terms of assembly, homotetramer.

Its subcellular location is the cytoplasm. It catalyses the reaction D-glyceraldehyde 3-phosphate + phosphate + NAD(+) = (2R)-3-phospho-glyceroyl phosphate + NADH + H(+). Its pathway is carbohydrate degradation; glycolysis; pyruvate from D-glyceraldehyde 3-phosphate: step 1/5. This is Glyceraldehyde-3-phosphate dehydrogenase (GPD1) from Phaeosphaeria nodorum (strain SN15 / ATCC MYA-4574 / FGSC 10173) (Glume blotch fungus).